A 451-amino-acid polypeptide reads, in one-letter code: Lipase member H (451 aa).

An N-terminal signal peptide occupies residues 1–16 (MLRLCFFISFMCLVKS). N-linked (GlcNAc...) asparagine glycosylation is present at N66. S154 (nucleophile) is an active-site residue. The active-site Charge relay system is the D178. C233 and C246 are oxidised to a cystine. Catalysis depends on H248, which acts as the Charge relay system. 3 disulfide bridges follow: C270–C281, C284–C292, and C427–C446.

This sequence belongs to the AB hydrolase superfamily. Lipase family. In terms of assembly, interacts with TTMP/C3orf52. As to expression, expressed in placenta and colon. Weakly expressed in small intestine.

The protein resides in the secreted. It localises to the cell membrane. The catalysed reaction is 1-hexadecanoyl-2-(9Z-octadecenoyl)-sn-glycero-3-phosphate + H2O = 2-(9Z-octadecenoyl)-sn-glycero-3-phosphate + hexadecanoate + H(+). Hydrolyzes specifically phosphatidic acid (PA) to produce 2-acyl lysophosphatidic acid (LPA; a potent bioactive lipid mediator) and fatty acid. Does not hydrolyze other phospholipids, like phosphatidylserine (PS), phosphatidylcholine (PC) and phosphatidylethanolamine (PE) or triacylglycerol (TG). The sequence is that of Lipase member H (Liph) from Mus musculus (Mouse).